We begin with the raw amino-acid sequence, 93 residues long: Small ribosomal subunit protein uS19 (93 aa).

This sequence belongs to the universal ribosomal protein uS19 family.

In terms of biological role, protein S19 forms a complex with S13 that binds strongly to the 16S ribosomal RNA. The polypeptide is Small ribosomal subunit protein uS19 (Synechococcus sp. (strain JA-2-3B'a(2-13)) (Cyanobacteria bacterium Yellowstone B-Prime)).